The sequence spans 224 residues: MKVTILQFPGTNCEYDAQHAFKSLGAETEILWHKSDTIPSDTDLLIVAGGFSYGDYLRSGAIAKFSPVMKAVIKYADDGGKVLGICNGFQVLTESGLLPGALKRNESLHFLSKHHHLKVINNENIFLEKLDKGDIVNIPIAHHDGNYYIDDSGLKELYANNQVLLKYCDENGNDKNPNGSIDSIAGICNKERNVFGLMPHPERAMEAILGSDDGIKMLQGFLRA.

Residues 2 to 224 form the Glutamine amidotransferase type-1 domain; it reads KVTILQFPGT…IKMLQGFLRA (223 aa). The active-site Nucleophile is Cys-86. Active-site residues include His-200 and Glu-202.

As to quaternary structure, part of the FGAM synthase complex composed of 1 PurL, 1 PurQ and 2 PurS subunits.

It is found in the cytoplasm. The catalysed reaction is N(2)-formyl-N(1)-(5-phospho-beta-D-ribosyl)glycinamide + L-glutamine + ATP + H2O = 2-formamido-N(1)-(5-O-phospho-beta-D-ribosyl)acetamidine + L-glutamate + ADP + phosphate + H(+). It catalyses the reaction L-glutamine + H2O = L-glutamate + NH4(+). Its pathway is purine metabolism; IMP biosynthesis via de novo pathway; 5-amino-1-(5-phospho-D-ribosyl)imidazole from N(2)-formyl-N(1)-(5-phospho-D-ribosyl)glycinamide: step 1/2. Functionally, part of the phosphoribosylformylglycinamidine synthase complex involved in the purines biosynthetic pathway. Catalyzes the ATP-dependent conversion of formylglycinamide ribonucleotide (FGAR) and glutamine to yield formylglycinamidine ribonucleotide (FGAM) and glutamate. The FGAM synthase complex is composed of three subunits. PurQ produces an ammonia molecule by converting glutamine to glutamate. PurL transfers the ammonia molecule to FGAR to form FGAM in an ATP-dependent manner. PurS interacts with PurQ and PurL and is thought to assist in the transfer of the ammonia molecule from PurQ to PurL. The protein is Phosphoribosylformylglycinamidine synthase subunit PurQ of Sulfurimonas denitrificans (strain ATCC 33889 / DSM 1251) (Thiomicrospira denitrificans (strain ATCC 33889 / DSM 1251)).